The following is a 365-amino-acid chain: Phosphoserine aminotransferase (365 aa).

Arg-46 serves as a coordination point for L-glutamate. Residues 80–81 (AT), Trp-106, Thr-157, Asp-177, and Gln-200 contribute to the pyridoxal 5'-phosphate site. At Lys-201 the chain carries N6-(pyridoxal phosphate)lysine. Position 242–243 (242–243 (NT)) interacts with pyridoxal 5'-phosphate.

Belongs to the class-V pyridoxal-phosphate-dependent aminotransferase family. SerC subfamily. As to quaternary structure, homodimer. Pyridoxal 5'-phosphate is required as a cofactor.

Its subcellular location is the cytoplasm. It catalyses the reaction O-phospho-L-serine + 2-oxoglutarate = 3-phosphooxypyruvate + L-glutamate. The catalysed reaction is 4-(phosphooxy)-L-threonine + 2-oxoglutarate = (R)-3-hydroxy-2-oxo-4-phosphooxybutanoate + L-glutamate. The protein operates within amino-acid biosynthesis; L-serine biosynthesis; L-serine from 3-phospho-D-glycerate: step 2/3. Its pathway is cofactor biosynthesis; pyridoxine 5'-phosphate biosynthesis; pyridoxine 5'-phosphate from D-erythrose 4-phosphate: step 3/5. In terms of biological role, catalyzes the reversible conversion of 3-phosphohydroxypyruvate to phosphoserine and of 3-hydroxy-2-oxo-4-phosphonooxybutanoate to phosphohydroxythreonine. The polypeptide is Phosphoserine aminotransferase (Leptospira biflexa serovar Patoc (strain Patoc 1 / Ames)).